The primary structure comprises 239 residues: tRNA (guanine-N(7)-)-methyltransferase (239 aa).

The S-adenosyl-L-methionine site is built by Glu-68, Glu-93, Asp-120, and Asp-143. Residue Asp-143 is part of the active site. Substrate contacts are provided by residues Lys-147, Asp-180, and 217-220 (TKFE).

It belongs to the class I-like SAM-binding methyltransferase superfamily. TrmB family.

It carries out the reaction guanosine(46) in tRNA + S-adenosyl-L-methionine = N(7)-methylguanosine(46) in tRNA + S-adenosyl-L-homocysteine. The protein operates within tRNA modification; N(7)-methylguanine-tRNA biosynthesis. Catalyzes the formation of N(7)-methylguanine at position 46 (m7G46) in tRNA. This is tRNA (guanine-N(7)-)-methyltransferase from Vibrio parahaemolyticus serotype O3:K6 (strain RIMD 2210633).